Consider the following 105-residue polypeptide: Venom metalloprotease inhibitor (105 aa).

The N-terminal stretch at 1-21 is a signal peptide; the sequence is MFRFVCVLFIALVVFCTTTSA. Disulfide bonds link C26–C61, C35–C57, C39–C50, C43–C83, and C63–C77. In terms of domain architecture, TIL spans 26–83; sequence CNRPNEEYRCGSACQTTCATLGQRCPIMNIRCNDACYCKEGYARYGDDTGMCVSISQC.

Belongs to the serine protease inhibitor-like (TIL domain-containing) family. As to expression, expressed by the venom gland.

Its subcellular location is the secreted. In terms of biological role, inhibits metalloprotease (human MMP3), trypsin, chymotrypsin, plasmin and microbial serine protease (proteinase K). Exhibits antifibrinolytic activity by binding plasmin and inhibiting it. Does not inhibit elastase, thrombin or microbial serine protease (subtilisin A). The protein is Venom metalloprotease inhibitor of Bombus ignitus (Bumblebee).